A 127-amino-acid polypeptide reads, in one-letter code: Protein pkiA (127 aa).

Residues Ile-16–Gly-127 enclose the HIT domain.

The chain is Protein pkiA (pkiA) from Dictyostelium discoideum (Social amoeba).